The primary structure comprises 79 residues: UPF0175 protein APE_0890a.1 (79 aa).

It belongs to the UPF0175 family.

This is UPF0175 protein APE_0890a.1 from Aeropyrum pernix (strain ATCC 700893 / DSM 11879 / JCM 9820 / NBRC 100138 / K1).